The sequence spans 326 residues: Flotillin-like protein FloA (326 aa).

2 consecutive transmembrane segments (helical) span residues 6 to 26 and 27 to 47; these read IILFFLVVAVIVLFYFVGSSV and SLWIQALVSGARVGLLNIVFM.

Belongs to the flotillin-like FloA family. Homooligomerizes.

Its subcellular location is the cell membrane. The protein localises to the membrane raft. Found in functional membrane microdomains (FMM) that may be equivalent to eukaryotic membrane rafts. FMMs are highly dynamic and increase in number as cells age. Flotillins are thought to be important factors in membrane fluidity. The protein is Flotillin-like protein FloA of Desulfosudis oleivorans (strain DSM 6200 / JCM 39069 / Hxd3) (Desulfococcus oleovorans).